We begin with the raw amino-acid sequence, 521 residues long: Cytochrome P450 1A1 (521 aa).

Phenylalanine 229 is a binding site for substrate. Heme is bound at residue cysteine 463.

It belongs to the cytochrome P450 family. The cofactor is heme.

Its subcellular location is the endoplasmic reticulum membrane. It localises to the microsome membrane. It carries out the reaction an organic molecule + reduced [NADPH--hemoprotein reductase] + O2 = an alcohol + oxidized [NADPH--hemoprotein reductase] + H2O + H(+). Its function is as follows. Cytochromes P450 are a group of heme-thiolate monooxygenases. They oxidize a variety of structurally unrelated compounds, including steroids, fatty acids, and xenobiotics. The polypeptide is Cytochrome P450 1A1 (cyp1a1) (Limanda limanda (Common dab)).